We begin with the raw amino-acid sequence, 365 residues long: UDP-N-acetylglucosamine--N-acetylmuramyl-(pentapeptide) pyrophosphoryl-undecaprenol N-acetylglucosamine transferase (365 aa).

UDP-N-acetyl-alpha-D-glucosamine-binding positions include 17–19 (TGG), Asn-129, Arg-167, Ser-194, Ile-250, 269–274 (ALTVSE), and Gln-295.

The protein belongs to the glycosyltransferase 28 family. MurG subfamily.

The protein localises to the cell inner membrane. The enzyme catalyses di-trans,octa-cis-undecaprenyl diphospho-N-acetyl-alpha-D-muramoyl-L-alanyl-D-glutamyl-meso-2,6-diaminopimeloyl-D-alanyl-D-alanine + UDP-N-acetyl-alpha-D-glucosamine = di-trans,octa-cis-undecaprenyl diphospho-[N-acetyl-alpha-D-glucosaminyl-(1-&gt;4)]-N-acetyl-alpha-D-muramoyl-L-alanyl-D-glutamyl-meso-2,6-diaminopimeloyl-D-alanyl-D-alanine + UDP + H(+). It participates in cell wall biogenesis; peptidoglycan biosynthesis. Its function is as follows. Cell wall formation. Catalyzes the transfer of a GlcNAc subunit on undecaprenyl-pyrophosphoryl-MurNAc-pentapeptide (lipid intermediate I) to form undecaprenyl-pyrophosphoryl-MurNAc-(pentapeptide)GlcNAc (lipid intermediate II). This chain is UDP-N-acetylglucosamine--N-acetylmuramyl-(pentapeptide) pyrophosphoryl-undecaprenol N-acetylglucosamine transferase, found in Shewanella halifaxensis (strain HAW-EB4).